Here is a 326-residue protein sequence, read N- to C-terminus: Mitochondrial glycine transporter (326 aa).

Solcar repeat units follow at residues 22 to 106, 135 to 216, and 228 to 312; these read SKTT…LRTS, SANL…LKRY, and SSSS…LILR. Helical transmembrane passes span 28-53, 81-107, 138-163, 191-214, 232-258, and 287-305; these read FGAG…TRVQ, GTLP…RTSL, LATG…VRYE, GFGA…EQLK, INFV…KTRL, and GLGL…AWTV.

This sequence belongs to the mitochondrial carrier (TC 2.A.29) family. SLC25A38 subfamily.

The protein resides in the mitochondrion inner membrane. The catalysed reaction is glycine(in) = glycine(out). Its function is as follows. Mitochondrial glycine transporter that imports glycine into the mitochondrial matrix. Plays an important role in providing glycine for the first enzymatic step in heme biosynthesis, the condensation of glycine with succinyl-CoA to produce 5-aminolevulinate (ALA) in the mitochondrial matrix. This chain is Mitochondrial glycine transporter, found in Emericella nidulans (strain FGSC A4 / ATCC 38163 / CBS 112.46 / NRRL 194 / M139) (Aspergillus nidulans).